A 533-amino-acid chain; its full sequence is MSTENTSLVVELLEYVKLGLSYFQALPLAQRVSIMVALPFVYTITWQLLYSLRKDRPPLVFYWIPWVGSAIPYGTKPYEFFEDCQKKYGDIFSFMLLGRIMTVYLGPKGHEFIFNAKLADVSAEAAYSHLTTPVFGKGVIYDCPNHRLMEQKKFVKGALTKEAFVRYVPLIAEEIYKYFRNSKNFKINENNSGIVDVMVSQPEMTIFTASRSLLGKEMRDKLDTDFAYLYSDLDKGFTPINFVFPNLPLEHYRKRDHAQQAISGTYMSLIKERREKNDIQNRDLIDELMKNSTYKDGTKMTDQEIANLLIGVLMGGQHTSAATSAWCLLHLAERPDVQEELYQEQMRVLNNDTKELTYDDLQNMPLLNQMIKETLRLHHPLHSLFRKVMRDVAIPNTSYVVPRDYHVLVSPGYTHLQEEFFPKPNEFNIHRWDGDAASSSAAGGDEVDYGFGAISKGVSSPYLPFGGGRHRCIGELFAYCQLGVLMSIFIRTMKWRYPTEGETVPPSDFTSMVTLPTAPAKIYWEKRHPEQKY.

Residue cysteine 472 participates in heme binding.

It belongs to the cytochrome P450 family. The cofactor is heme.

It localises to the membrane. It carries out the reaction a 14alpha-methyl steroid + 3 reduced [NADPH--hemoprotein reductase] + 3 O2 = a Delta(14) steroid + formate + 3 oxidized [NADPH--hemoprotein reductase] + 4 H2O + 4 H(+). The catalysed reaction is a 14alpha-methyl steroid + reduced [NADPH--hemoprotein reductase] + O2 = a 14alpha-hydroxymethyl steroid + oxidized [NADPH--hemoprotein reductase] + H2O + H(+). It catalyses the reaction a 14alpha-hydroxymethyl steroid + reduced [NADPH--hemoprotein reductase] + O2 = a 14alpha-formyl steroid + oxidized [NADPH--hemoprotein reductase] + 2 H2O + H(+). The enzyme catalyses a 14alpha-formyl steroid + reduced [NADPH--hemoprotein reductase] + O2 = a Delta(14) steroid + formate + oxidized [NADPH--hemoprotein reductase] + H2O + 2 H(+). It carries out the reaction lanosterol + 3 reduced [NADPH--hemoprotein reductase] + 3 O2 = 4,4-dimethyl-5alpha-cholesta-8,14,24-trien-3beta-ol + formate + 3 oxidized [NADPH--hemoprotein reductase] + 4 H2O + 4 H(+). The catalysed reaction is lanosterol + reduced [NADPH--hemoprotein reductase] + O2 = 32-hydroxylanosterol + oxidized [NADPH--hemoprotein reductase] + H2O + H(+). It catalyses the reaction 32-hydroxylanosterol + reduced [NADPH--hemoprotein reductase] + O2 = 32-oxolanosterol + oxidized [NADPH--hemoprotein reductase] + 2 H2O + H(+). The enzyme catalyses 32-oxolanosterol + reduced [NADPH--hemoprotein reductase] + O2 = 4,4-dimethyl-5alpha-cholesta-8,14,24-trien-3beta-ol + formate + oxidized [NADPH--hemoprotein reductase] + H2O + 2 H(+). It carries out the reaction eburicol + 3 reduced [NADPH--hemoprotein reductase] + 3 O2 = 14-demethyleburicol + formate + 3 oxidized [NADPH--hemoprotein reductase] + 4 H2O + 4 H(+). The catalysed reaction is eburicol + reduced [NADPH--hemoprotein reductase] + O2 = 32-hydroxyeburicol + oxidized [NADPH--hemoprotein reductase] + H2O + H(+). It catalyses the reaction 32-hydroxyeburicol + reduced [NADPH--hemoprotein reductase] + O2 = 32-oxoeburicol + oxidized [NADPH--hemoprotein reductase] + 2 H2O + H(+). The enzyme catalyses 32-oxoeburicol + reduced [NADPH--hemoprotein reductase] + O2 = 14-demethyleburicol + formate + oxidized [NADPH--hemoprotein reductase] + H2O + 2 H(+). It functions in the pathway steroid biosynthesis; zymosterol biosynthesis; zymosterol from lanosterol: step 1/6. Sterol 14alpha-demethylase that plays a critical role in the third module of ergosterol biosynthesis pathway, being ergosterol the major sterol component in fungal membranes that participates in a variety of functions. The third module or late pathway involves the ergosterol synthesis itself through consecutive reactions that mainly occur in the endoplasmic reticulum (ER) membrane. In filamentous fungi, during the initial step of this module, lanosterol (lanosta-8,24-dien-3beta-ol) can be metabolized to eburicol. Sterol 14alpha-demethylase catalyzes the three-step oxidative removal of the 14alpha-methyl group (C-32) of both these sterols in the form of formate, and converts eburicol and lanosterol to 14-demethyleburicol (4,4,24-trimethylergosta-8,14,24(28)-trienol) and 4,4-dimethyl-5alpha-cholesta-8,14,24-trien-3beta-ol, respectively, which are further metabolized by other enzymes in the pathway to ergosterol. Can also use substrates not intrinsic to fungi, such as 24,25-dihydrolanosterol (DHL), producing 4,4-dimethyl-8,14-cholestadien-3-beta-ol, but at lower rates than the endogenous substrates. This chain is Lanosterol 14-alpha demethylase (ERG11), found in Candida glabrata (strain ATCC 2001 / BCRC 20586 / JCM 3761 / NBRC 0622 / NRRL Y-65 / CBS 138) (Yeast).